Here is a 342-residue protein sequence, read N- to C-terminus: Dihydroorotase (342 aa).

Histidine 13 and histidine 15 together coordinate Zn(2+). Substrate-binding positions include 15 to 17 (HLR) and asparagine 41. Zn(2+)-binding residues include lysine 98, histidine 135, and histidine 173. An N6-carboxylysine modification is found at lysine 98. Histidine 135 serves as a coordination point for substrate. Substrate is bound at residue leucine 218. Zn(2+) is bound at residue aspartate 246. The active site involves aspartate 246. Positions 250 and 262 each coordinate substrate.

Belongs to the metallo-dependent hydrolases superfamily. DHOase family. Class II DHOase subfamily. Homodimer. It depends on Zn(2+) as a cofactor.

The catalysed reaction is (S)-dihydroorotate + H2O = N-carbamoyl-L-aspartate + H(+). The protein operates within pyrimidine metabolism; UMP biosynthesis via de novo pathway; (S)-dihydroorotate from bicarbonate: step 3/3. Functionally, catalyzes the reversible cyclization of carbamoyl aspartate to dihydroorotate. The polypeptide is Dihydroorotase (Photobacterium profundum (strain SS9)).